A 669-amino-acid polypeptide reads, in one-letter code: DNA ligase (669 aa).

Residues 33–37, 82–83, and Glu-114 contribute to the NAD(+) site; these read DAEYD and SL. The active-site N6-AMP-lysine intermediate is the Lys-116. Arg-137, Glu-174, Lys-291, and Lys-315 together coordinate NAD(+). 4 residues coordinate Zn(2+): Cys-409, Cys-412, Cys-427, and Cys-433. The BRCT domain occupies 593–669; that stretch reads EIPQPLAGKV…QTEQDLLALL (77 aa).

It belongs to the NAD-dependent DNA ligase family. LigA subfamily. It depends on Mg(2+) as a cofactor. The cofactor is Mn(2+).

It carries out the reaction NAD(+) + (deoxyribonucleotide)n-3'-hydroxyl + 5'-phospho-(deoxyribonucleotide)m = (deoxyribonucleotide)n+m + AMP + beta-nicotinamide D-nucleotide.. DNA ligase that catalyzes the formation of phosphodiester linkages between 5'-phosphoryl and 3'-hydroxyl groups in double-stranded DNA using NAD as a coenzyme and as the energy source for the reaction. It is essential for DNA replication and repair of damaged DNA. In Vibrio vulnificus (strain CMCP6), this protein is DNA ligase.